Here is a 145-residue protein sequence, read N- to C-terminus: Ribosome maturation factor RimP (145 aa).

It belongs to the RimP family.

Its subcellular location is the cytoplasm. Functionally, required for maturation of 30S ribosomal subunits. The protein is Ribosome maturation factor RimP of Borreliella burgdorferi (strain ATCC 35210 / DSM 4680 / CIP 102532 / B31) (Borrelia burgdorferi).